A 162-amino-acid chain; its full sequence is MRKKNNIKKWLLIIAGFLIICIITLFVMVSGNKVKYEGSGKSGLWMSNLEKSDKTSIGPNYFLNLYWQGSKKEEKWTVVERITLYVDGEKYQDDNVDEYDLSEYTGDEMPGGGRMEDHISTFDYMPEDEVIGHDVLVKVEWRTGQKKQTEAIKLHKKPWYKK.

Residues 1–34 (MRKKNNIKKWLLIIAGFLIICIITLFVMVSGNKV) form the signal peptide.

This is an uncharacterized protein from Bacillus subtilis (strain 168).